Here is a 206-residue protein sequence, read N- to C-terminus: uncharacterized protein (206 aa).

This is an uncharacterized protein from Mycoplasma pneumoniae (strain ATCC 29342 / M129 / Subtype 1) (Mycoplasmoides pneumoniae).